We begin with the raw amino-acid sequence, 944 residues long: Breast cancer type 2 susceptibility protein homolog (944 aa).

2 stretches are compositionally biased toward basic and acidic residues: residues 325 to 348 (KKVK…ESKI) and 415 to 431 (NSIK…ETPN). 2 disordered regions span residues 325 to 354 (KKVK…ASCD) and 415 to 440 (NSIK…SSHQ). 3 BRCA2 repeats span residues 543–577 (AEPE…EFQS), 644–678 (NESQ…QSRA), and 719–753 (SETE…EFQA). Disordered stretches follow at residues 823-854 (LCSQ…LDQA) and 876-944 (SSTE…RSRY). 2 stretches are compositionally biased toward polar residues: residues 838–852 (IHSS…SPLD) and 876–885 (SSTETSTSCA). Over residues 904 to 921 (ADRDLNRSKDCAKNRQDA) the composition is skewed to basic and acidic residues. Residues 932–944 (KKSRRLGLSRSRY) are compositionally biased toward basic residues.

In terms of assembly, interacts with Rad9 and spn-A/Rad51.

The protein resides in the nucleus. Functionally, involved in and required for double-strand break repair by meiotic and mitotic homologous recombination. During meiosis, has a dual role in the repair of meiotic double-stranded breaks and the efficient activation of the meiotic recombination checkpoint. The chain is Breast cancer type 2 susceptibility protein homolog from Drosophila simulans (Fruit fly).